A 438-amino-acid polypeptide reads, in one-letter code: MDVEIQDTPGKISISKRSILSGTVENIDYPHYCDLLRKMNMPFVKGLENRHNYGRFEKKCNPAFLKFHPYPPSVLPDYHLHDPYPPPYGPHYPLFPLRDDVTLGDSCSGFMSPGGDADLNPGIGRTIPTLVDFSDVKPQHRVPRPDTGFQTTIKRQKILSEELQQNRRWNSREVPDISIRARLGGWTSPLKVTPLQPHHEGRSLSHIFTFDEEATCTDEGEPLVQTNKKCNAKDSFYKSSTQKAYEDVPWDKMLPPKLVPEETTLEKTADPISQCFTLKRYKGVPAITQMVGELWDRFQTRSFLAPVKPINFVSSSSRSKYIPLYTGHVQSTNADDVDNPLGDIASLAKQRYSKPLYTNTSRAANIPGYTGKVHFTATHPANSNIPSTTPSPDSELHRVFQKEMAVDLFRHQAPLSRLVTTVRPYNPFNKKDKETIDY.

Testis-specific.

Essential for normal spermatogenesis. The sequence is that of Protein SPMIP7 from Homo sapiens (Human).